Reading from the N-terminus, the 450-residue chain is Molybdate-anion transporter (450 aa).

The next 12 membrane-spanning stretches (helical) occupy residues 1–21, 43–63, 79–99, 128–148, 176–196, 198–218, 249–269, 278–298, 311–331, 344–364, 376–396, and 409–429; these read MLVT…GLEL, LDFY…APYL, ILYV…SSLV, FVLL…FSAF, FWNH…ACWM, LGPV…GALA, VLLL…FVFL, GAPL…GSSL, PMHL…MLTF, FIAF…MSFL, GVLN…LLVL, and FSIC…LFTV.

The protein belongs to the major facilitator superfamily.

The protein localises to the cell membrane. Its function is as follows. Mediates high-affinity intracellular uptake of the rare oligo-element molybdenum. The sequence is that of Molybdate-anion transporter (MFSD5) from Bos taurus (Bovine).